The primary structure comprises 385 residues: Probable tRNA sulfurtransferase (385 aa).

One can recognise a THUMP domain in the interval 65–165 (AILQELFSFL…KEHFLVFTER (101 aa)). Residues 183-184 (LL), 208-209 (TF), R267, G285, and Q294 each bind ATP.

It belongs to the ThiI family.

Its subcellular location is the cytoplasm. The enzyme catalyses [ThiI sulfur-carrier protein]-S-sulfanyl-L-cysteine + a uridine in tRNA + 2 reduced [2Fe-2S]-[ferredoxin] + ATP + H(+) = [ThiI sulfur-carrier protein]-L-cysteine + a 4-thiouridine in tRNA + 2 oxidized [2Fe-2S]-[ferredoxin] + AMP + diphosphate. The catalysed reaction is [ThiS sulfur-carrier protein]-C-terminal Gly-Gly-AMP + S-sulfanyl-L-cysteinyl-[cysteine desulfurase] + AH2 = [ThiS sulfur-carrier protein]-C-terminal-Gly-aminoethanethioate + L-cysteinyl-[cysteine desulfurase] + A + AMP + 2 H(+). It participates in cofactor biosynthesis; thiamine diphosphate biosynthesis. Catalyzes the ATP-dependent transfer of a sulfur to tRNA to produce 4-thiouridine in position 8 of tRNAs, which functions as a near-UV photosensor. Also catalyzes the transfer of sulfur to the sulfur carrier protein ThiS, forming ThiS-thiocarboxylate. This is a step in the synthesis of thiazole, in the thiamine biosynthesis pathway. The sulfur is donated as persulfide by IscS. The protein is Probable tRNA sulfurtransferase of Mycoplasma genitalium (strain ATCC 33530 / DSM 19775 / NCTC 10195 / G37) (Mycoplasmoides genitalium).